The chain runs to 696 residues: MTKLGWGRRVVWGAALAAVAMLGACNGDESAERNRLPGFVSGSVRTTAYDGASDDLLTAGLGKTGLAAATAPGFANPSRPTSAELRRLAIWSNYRALVDMSANGGYGRFWGPNVDLDGNDTLGEGKIPGTEYLAYADDGSGSKNVTLLVQVPASFNPAQPCIVTATSSGSRGVYGAISAAGEWALKRGCAVAYNDKGGGNGAHELGSDTVTLIDGTLANAVLAGTASLFTANVTSGDLAAFNSRFPNRYAFKHAHSQQNPEQDWGRVTLQSVEFAYWALNEQFGPVIDGARHGVRYRAGDITTIAASVSNGGGASLAAAEQDNRGWITAVVVGEPQINVRMAPNAVVRAGGQPVPSFGRPLADYATLANLLEPCAAASASLAGAPYLSALPATTTQSIRTQRCATLAAAGLVAGADTQSQAADALAQLHAAGYLADSDLLQAPMWDSQAIPAIAVTYANAYTRSRVTDNLCNFSFATTNPATGVVAAPAASPMPSVFGVGNGVPPTAGINLVFNDGAGTDHRLATPDASFAGALCLRQLWTNGMLGMPANVDAVRVNANLHGKPAIIVQGRSDALVPVNHASRAYVAQNGISEAGRSQLVFYEVTNGQHFDAFLSVPGFDTRFVPVHYYNVQALNLMWRHLKNGAPLPPSQVIRTVPRGGTPGAAPALTSANLPPISTAPGANAIATGVGTIDVPL.

A signal peptide spans 1-26; sequence MTKLGWGRRVVWGAALAAVAMLGACN. The active-site Charge relay system is the serine 309.

Belongs to the D-(-)-3-hydroxybutyrate oligomer hydrolase family.

Its subcellular location is the secreted. The enzyme catalyses (3R)-hydroxybutanoate dimer + H2O = 2 (R)-3-hydroxybutanoate + H(+). It functions in the pathway lipid metabolism; butanoate metabolism. Participates in the degradation of poly-3-hydroxybutyrate (PHB). It works downstream of poly(3-hydroxybutyrate) depolymerase, hydrolyzing D(-)-3-hydroxybutyrate oligomers of various length (3HB-oligomers) into 3HB-monomers. This is D-(-)-3-hydroxybutyrate oligomer hydrolase from Burkholderia cenocepacia (strain HI2424).